The sequence spans 396 residues: NADH-quinone oxidoreductase subunit D (396 aa).

The protein belongs to the complex I 49 kDa subunit family. As to quaternary structure, NDH-1 is composed of 14 different subunits. Subunits NuoB, C, D, E, F, and G constitute the peripheral sector of the complex.

It is found in the cell inner membrane. It catalyses the reaction a quinone + NADH + 5 H(+)(in) = a quinol + NAD(+) + 4 H(+)(out). In terms of biological role, NDH-1 shuttles electrons from NADH, via FMN and iron-sulfur (Fe-S) centers, to quinones in the respiratory chain. The immediate electron acceptor for the enzyme in this species is believed to be ubiquinone. Couples the redox reaction to proton translocation (for every two electrons transferred, four hydrogen ions are translocated across the cytoplasmic membrane), and thus conserves the redox energy in a proton gradient. The protein is NADH-quinone oxidoreductase subunit D of Brucella canis (strain ATCC 23365 / NCTC 10854 / RM-666).